Consider the following 451-residue polypeptide: 23S rRNA (uracil(1939)-C(5))-methyltransferase RlmD (451 aa).

Residues 20-78 (QIPAGKKQRLTIERLSDDGRGIAFLEGKTWFVAGSLAGEEVEARVLNARGKVVEARTER) enclose the TRAM domain. [4Fe-4S] cluster contacts are provided by cysteine 91, cysteine 97, cysteine 100, and cysteine 179. S-adenosyl-L-methionine contacts are provided by glutamine 283, phenylalanine 312, asparagine 317, glutamate 333, aspartate 360, and aspartate 381. Cysteine 407 (nucleophile) is an active-site residue.

Belongs to the class I-like SAM-binding methyltransferase superfamily. RNA M5U methyltransferase family. RlmD subfamily.

The enzyme catalyses uridine(1939) in 23S rRNA + S-adenosyl-L-methionine = 5-methyluridine(1939) in 23S rRNA + S-adenosyl-L-homocysteine + H(+). Its function is as follows. Catalyzes the formation of 5-methyl-uridine at position 1939 (m5U1939) in 23S rRNA. This is 23S rRNA (uracil(1939)-C(5))-methyltransferase RlmD from Pseudomonas savastanoi pv. phaseolicola (strain 1448A / Race 6) (Pseudomonas syringae pv. phaseolicola (strain 1448A / Race 6)).